The chain runs to 612 residues: Probable methyltransferase PMT9 (612 aa).

The Cytoplasmic segment spans residues 1 to 14; that stretch reads MKHFRTERVRATPK. Residues 15–35 form a helical; Signal-anchor for type II membrane protein membrane-spanning segment; that stretch reads LFTYVLVGFIALLGLTCLYYG. The Lumenal segment spans residues 36-612; that stretch reads SSFAPGSRKS…LWSLPAISVS (577 aa). N-linked (GlcNAc...) asparagine glycans are attached at residues N107, N383, and N562.

Belongs to the methyltransferase superfamily.

It is found in the golgi apparatus membrane. The protein is Probable methyltransferase PMT9 of Arabidopsis thaliana (Mouse-ear cress).